An 806-amino-acid polypeptide reads, in one-letter code: Glycerol-3-phosphate acyltransferase (806 aa).

The HXXXXD motif signature appears at 305-310 (CHRSHM).

Belongs to the GPAT/DAPAT family.

It localises to the cell inner membrane. The catalysed reaction is sn-glycerol 3-phosphate + an acyl-CoA = a 1-acyl-sn-glycero-3-phosphate + CoA. It participates in phospholipid metabolism; CDP-diacylglycerol biosynthesis; CDP-diacylglycerol from sn-glycerol 3-phosphate: step 1/3. This Enterobacter sp. (strain 638) protein is Glycerol-3-phosphate acyltransferase.